Reading from the N-terminus, the 407-residue chain is Phosphopentomutase (407 aa).

Asp-10, Asp-306, His-311, Asp-347, His-348, and His-359 together coordinate Mn(2+).

This sequence belongs to the phosphopentomutase family. It depends on Mn(2+) as a cofactor.

It localises to the cytoplasm. The catalysed reaction is 2-deoxy-alpha-D-ribose 1-phosphate = 2-deoxy-D-ribose 5-phosphate. It carries out the reaction alpha-D-ribose 1-phosphate = D-ribose 5-phosphate. Its pathway is carbohydrate degradation; 2-deoxy-D-ribose 1-phosphate degradation; D-glyceraldehyde 3-phosphate and acetaldehyde from 2-deoxy-alpha-D-ribose 1-phosphate: step 1/2. Isomerase that catalyzes the conversion of deoxy-ribose 1-phosphate (dRib-1-P) and ribose 1-phosphate (Rib-1-P) to deoxy-ribose 5-phosphate (dRib-5-P) and ribose 5-phosphate (Rib-5-P), respectively. The sequence is that of Phosphopentomutase from Yersinia pestis bv. Antiqua (strain Antiqua).